The following is a 179-amino-acid chain: MARLKEIYRKEIAPKLKEELKLANVMEVPRITKITLNMGLGEAIGDKKVIENAVADLEKITGQKVVVTHARKSIAGFKVREGWPIGVKVTLRRERMYEFLDRLLSISLPRVRDFRGLNAKSFDGRGNYSMGVKEQIIFPEIDYDKIDALRGLDITLTTTARNDDEGRALLRAFNFPFRN.

Belongs to the universal ribosomal protein uL5 family. In terms of assembly, part of the 50S ribosomal subunit; part of the 5S rRNA/L5/L18/L25 subcomplex. Contacts the 5S rRNA and the P site tRNA. Forms a bridge to the 30S subunit in the 70S ribosome.

Its function is as follows. This is one of the proteins that bind and probably mediate the attachment of the 5S RNA into the large ribosomal subunit, where it forms part of the central protuberance. In the 70S ribosome it contacts protein S13 of the 30S subunit (bridge B1b), connecting the 2 subunits; this bridge is implicated in subunit movement. Contacts the P site tRNA; the 5S rRNA and some of its associated proteins might help stabilize positioning of ribosome-bound tRNAs. The protein is Large ribosomal subunit protein uL5 of Ectopseudomonas mendocina (strain ymp) (Pseudomonas mendocina).